A 306-amino-acid chain; its full sequence is uncharacterized protein (306 aa).

This sequence to M.jannaschii MJ0658.

This is an uncharacterized protein from Methanothermobacter thermautotrophicus (strain ATCC 29096 / DSM 1053 / JCM 10044 / NBRC 100330 / Delta H) (Methanobacterium thermoautotrophicum).